The following is a 795-amino-acid chain: Outer membrane protein assembly factor BamA (795 aa).

The signal sequence occupies residues 1–19 (MKKLLIASLLFGTTTTVFA). 5 POTRA domains span residues 22–89 (FVAK…VVAK), 90–170 (SIIS…INED), 173–259 (AKLA…VNEG), 262–341 (YDLR…VDAG), and 344–418 (LTVR…VKER).

This sequence belongs to the BamA family. Part of the Bam complex.

Its subcellular location is the cell outer membrane. Functionally, part of the outer membrane protein assembly complex, which is involved in assembly and insertion of beta-barrel proteins into the outer membrane. In Haemophilus influenzae (strain ATCC 51907 / DSM 11121 / KW20 / Rd), this protein is Outer membrane protein assembly factor BamA.